Here is a 365-residue protein sequence, read N- to C-terminus: Serine/threonine-protein kinase SAPK6 (365 aa).

The 257-residue stretch at 4-260 folds into the Protein kinase domain; it reads YELLKDIGSG…IREIRNHPWF (257 aa). Residues 10–18 and lysine 33 each bind ATP; that span reads IGSGNFGVA. Aspartate 123 serves as the catalytic Proton acceptor. The tract at residues 298 to 365 is disordered; it reads VQEAKTPPPS…AHASCDLQKS (68 aa). Acidic residues predominate over residues 317–347; that stretch reads TEEEEQEDGKNPDDDEGDRDEEEGEEGDSED.

Belongs to the protein kinase superfamily. Ser/Thr protein kinase family. Interacts with BZIP46. May be phosphorylated. Expressed in leaf blades and leaf sheaths. Expressed in shoots and roots of young seedlings.

The catalysed reaction is L-seryl-[protein] + ATP = O-phospho-L-seryl-[protein] + ADP + H(+). It catalyses the reaction L-threonyl-[protein] + ATP = O-phospho-L-threonyl-[protein] + ADP + H(+). Its activity is regulated as follows. Activated by hyperosmotic stress. In terms of biological role, may play a role in signal transduction of hyperosmotic response. Can phosphorylate ABI5 in vitro. Can phosphorylate BZIP46 in vitro. The polypeptide is Serine/threonine-protein kinase SAPK6 (Oryza sativa subsp. japonica (Rice)).